A 204-amino-acid chain; its full sequence is Tat proofreading chaperone DmsD (204 aa).

It belongs to the TorD/DmsD family. DmsD subfamily.

Functionally, required for biogenesis/assembly of DMSO reductase, but not for the interaction of the DmsA signal peptide with the Tat system. May be part of a chaperone cascade complex that facilitates a folding-maturation pathway for the substrate protein. In Salmonella paratyphi A (strain ATCC 9150 / SARB42), this protein is Tat proofreading chaperone DmsD.